Here is a 185-residue protein sequence, read N- to C-terminus: UPF0397 protein AYWB_013 (185 aa).

5 helical membrane-spanning segments follow: residues 13-33 (IGLS…PVGF), 42-62 (AFLA…VGLI), 69-89 (FFLF…IGFI), 109-129 (IVYF…FFAP), and 148-168 (FLIV…LMTI).

It belongs to the UPF0397 family.

The protein resides in the cell membrane. In Aster yellows witches'-broom phytoplasma (strain AYWB), this protein is UPF0397 protein AYWB_013.